A 715-amino-acid chain; its full sequence is Polyribonucleotide nucleotidyltransferase (715 aa).

Mg(2+) is bound by residues D497 and D503. The KH domain maps to 564–623 (PRLLTMKIDPEQIGLVIGPGGKTIKSITEQTGSKIDIADDGTVTIAAIQAKKAERARDLI). An S1 motif domain is found at 633 to 701 (GEVYLGRVTR…NKGRLNLTRL (69 aa)).

Belongs to the polyribonucleotide nucleotidyltransferase family. It depends on Mg(2+) as a cofactor.

Its subcellular location is the cytoplasm. The enzyme catalyses RNA(n+1) + phosphate = RNA(n) + a ribonucleoside 5'-diphosphate. In terms of biological role, involved in mRNA degradation. Catalyzes the phosphorolysis of single-stranded polyribonucleotides processively in the 3'- to 5'-direction. The protein is Polyribonucleotide nucleotidyltransferase of Crocosphaera subtropica (strain ATCC 51142 / BH68) (Cyanothece sp. (strain ATCC 51142)).